The sequence spans 62 residues: Large ribosomal subunit protein bL35 (62 aa).

A compositionally biased stretch (basic residues) spans 1–26 (MPKMKTKSGLKKRIKITATGKVKRGN). The interval 1–62 (MPKMKTKSGL…SDFKRYKELI (62 aa)) is disordered. Residues 53–62 (SDFKRYKELI) are compositionally biased toward basic and acidic residues.

Belongs to the bacterial ribosomal protein bL35 family.

In Metamycoplasma arthritidis (strain 158L3-1) (Mycoplasma arthritidis), this protein is Large ribosomal subunit protein bL35.